A 295-amino-acid chain; its full sequence is MGKRDIALRIKSVKEVRKITRAMYLISASKFQKAKGMLDRVRPYYYRVQTVMKDILLHTGEVTSRYLEKKDVPEKQDKRKVFLIVTGDKGLCGAYNHNVIKASIELIKNEKANLKVVGEVGRRYFIKKGYDVDRDFLYTAQNPTVDLAAEIAEILLKEYNNGDADEIWAVYTEMKGLSQKVRTLRLLPLDVENFMSIAAEEEEAVEEHVVIDSDMIYEPSPSEVFDAIVPEYLKGLIYSILVQAFASEHFSRMVAMDGATSNADEMIEKLTLLYNKLRQASITQEIIEIITGASV.

The protein belongs to the ATPase gamma chain family. F-type ATPases have 2 components, CF(1) - the catalytic core - and CF(0) - the membrane proton channel. CF(1) has five subunits: alpha(3), beta(3), gamma(1), delta(1), epsilon(1). CF(0) has three main subunits: a, b and c.

Its subcellular location is the cell membrane. Produces ATP from ADP in the presence of a proton gradient across the membrane. The gamma chain is believed to be important in regulating ATPase activity and the flow of protons through the CF(0) complex. The sequence is that of ATP synthase gamma chain from Caldanaerobacter subterraneus subsp. tengcongensis (strain DSM 15242 / JCM 11007 / NBRC 100824 / MB4) (Thermoanaerobacter tengcongensis).